A 903-amino-acid chain; its full sequence is Alanine--tRNA ligase (903 aa).

Zn(2+)-binding residues include His591, His595, Cys695, and His699.

This sequence belongs to the class-II aminoacyl-tRNA synthetase family. Requires Zn(2+) as cofactor.

Its subcellular location is the cytoplasm. The catalysed reaction is tRNA(Ala) + L-alanine + ATP = L-alanyl-tRNA(Ala) + AMP + diphosphate. Functionally, catalyzes the attachment of alanine to tRNA(Ala) in a two-step reaction: alanine is first activated by ATP to form Ala-AMP and then transferred to the acceptor end of tRNA(Ala). Also edits incorrectly charged Ser-tRNA(Ala) and Gly-tRNA(Ala) via its editing domain. The chain is Alanine--tRNA ligase from Methanosphaera stadtmanae (strain ATCC 43021 / DSM 3091 / JCM 11832 / MCB-3).